We begin with the raw amino-acid sequence, 369 residues long: Xylene/toluene monooxygenase hydroxylase component XylM (369 aa).

3 helical membrane passes run 8-28 (LIPVVTACGLIGFYYGGYWVW), 60-80 (LTQYLQLPLMIGLYGLLVFGV), and 91-111 (LQVAGCILSLAWLSGVPTLPV). Fe cation is bound by residues H113, H117, H143, H147, and H148. A helical membrane pass occupies residues 207-227 (VALLLALPGLVSYLGGPALGL). Positions 282, 285, and 286 each coordinate Fe cation. A helical transmembrane segment spans residues 305 to 325 (MPSLFVCFLLGLIPPLWFALI).

This sequence belongs to the fatty acid desaturase type 1 family. AlkB subfamily. As to quaternary structure, the xylene/toluene monooxygenase is composed of two subunits: the electron transfer component XylA and the hydroxylase component XylM. Fe(2+) is required as a cofactor.

The protein resides in the cell inner membrane. The catalysed reaction is m-xylene + 2 reduced [2Fe-2S]-[ferredoxin] + O2 + 2 H(+) = 3-methylbenzyl alcohol + 2 oxidized [2Fe-2S]-[ferredoxin] + H2O. It catalyses the reaction p-xylene + 2 reduced [2Fe-2S]-[ferredoxin] + O2 + 2 H(+) = 4-methylbenzyl alcohol + 2 oxidized [2Fe-2S]-[ferredoxin] + H2O. The enzyme catalyses toluene + 2 reduced [2Fe-2S]-[ferredoxin] + O2 + 2 H(+) = benzyl alcohol + 2 oxidized [2Fe-2S]-[ferredoxin] + H2O. Component of a monooxygenase that catalyzes the first step in the degradation of xylenes and toluenes. XylM catalyzes the hydroxylation of the methyl side chain of xylenes and toluenes. The electrons are provided by the electron transfer component XylA. The best substrates are m-xylene and p-xylene, followed by toluene. Shows weak activity with o-xylene. In vitro, is also active with substituted compounds, such as chlorotoluenes. Cannot use benzyl alcohol. This is Xylene/toluene monooxygenase hydroxylase component XylM from Pseudomonas putida (Arthrobacter siderocapsulatus).